The primary structure comprises 155 residues: Ribonuclease HI (155 aa).

Residues 1 to 142 form the RNase H type-1 domain; the sequence is MTKQVEIFTD…CDELARAAAE (142 aa). Positions 10, 48, 70, and 134 each coordinate Mg(2+).

This sequence belongs to the RNase H family. As to quaternary structure, monomer. Requires Mg(2+) as cofactor.

The protein localises to the cytoplasm. It carries out the reaction Endonucleolytic cleavage to 5'-phosphomonoester.. In terms of biological role, endonuclease that specifically degrades the RNA of RNA-DNA hybrids. The sequence is that of Ribonuclease HI from Vibrio vulnificus (strain CMCP6).